Reading from the N-terminus, the 100-residue chain is Small ribosomal subunit protein uS14c (100 aa).

This sequence belongs to the universal ribosomal protein uS14 family. As to quaternary structure, part of the 30S ribosomal subunit.

The protein resides in the plastid. Its subcellular location is the chloroplast. Functionally, binds 16S rRNA, required for the assembly of 30S particles. In Huperzia lucidula (Shining clubmoss), this protein is Small ribosomal subunit protein uS14c.